A 179-amino-acid polypeptide reads, in one-letter code: Large ribosomal subunit protein uL5 (179 aa).

This sequence belongs to the universal ribosomal protein uL5 family. As to quaternary structure, part of the 50S ribosomal subunit; part of the 5S rRNA/L5/L18/L25 subcomplex. Contacts the 5S rRNA and the P site tRNA. Forms a bridge to the 30S subunit in the 70S ribosome.

Functionally, this is one of the proteins that bind and probably mediate the attachment of the 5S RNA into the large ribosomal subunit, where it forms part of the central protuberance. In the 70S ribosome it contacts protein S13 of the 30S subunit (bridge B1b), connecting the 2 subunits; this bridge is implicated in subunit movement. Contacts the P site tRNA; the 5S rRNA and some of its associated proteins might help stabilize positioning of ribosome-bound tRNAs. This chain is Large ribosomal subunit protein uL5, found in Synechococcus sp. (strain CC9605).